The chain runs to 291 residues: Pyridoxal 5'-phosphate synthase subunit PdxS (291 aa).

Aspartate 23 provides a ligand contact to D-ribose 5-phosphate. Residue lysine 80 is the Schiff-base intermediate with D-ribose 5-phosphate of the active site. Position 152 (glycine 152) interacts with D-ribose 5-phosphate. Arginine 164 serves as a coordination point for D-glyceraldehyde 3-phosphate. D-ribose 5-phosphate-binding positions include glycine 213 and 234 to 235; that span reads GS.

The protein belongs to the PdxS/SNZ family. As to quaternary structure, in the presence of PdxT, forms a dodecamer of heterodimers.

It catalyses the reaction aldehydo-D-ribose 5-phosphate + D-glyceraldehyde 3-phosphate + L-glutamine = pyridoxal 5'-phosphate + L-glutamate + phosphate + 3 H2O + H(+). The protein operates within cofactor biosynthesis; pyridoxal 5'-phosphate biosynthesis. Functionally, catalyzes the formation of pyridoxal 5'-phosphate from ribose 5-phosphate (RBP), glyceraldehyde 3-phosphate (G3P) and ammonia. The ammonia is provided by the PdxT subunit. Can also use ribulose 5-phosphate and dihydroxyacetone phosphate as substrates, resulting from enzyme-catalyzed isomerization of RBP and G3P, respectively. This Haemophilus influenzae (strain PittGG) protein is Pyridoxal 5'-phosphate synthase subunit PdxS.